We begin with the raw amino-acid sequence, 660 residues long: Long chain acyl-CoA synthetase 1 (660 aa).

225–236 (IMYTSGTSGDPK) serves as a coordination point for ATP. Positions 492–516 (DGWFHTGDIGEILPNGVLKIIDRKK) are fatty acid-binding.

The protein belongs to the ATP-dependent AMP-binding enzyme family. Requires Mg(2+) as cofactor. In terms of tissue distribution, epidermal-specific expression along the entire stem. In cauline leaves, was expressed over the entire leaf surface, most strongly in trichomes and guard cells, but not in mesophyll cells. In flowers, the expression was detected in the stigma and filaments of the stamens, and in the carpel was expressed specifically in ovaries. In roots, was expressed in primary and lateral roots, but not in the root tips.

It is found in the endoplasmic reticulum. The catalysed reaction is a long-chain fatty acid + ATP + CoA = a long-chain fatty acyl-CoA + AMP + diphosphate. It participates in lipid metabolism; fatty acid metabolism. Functionally, activation of long-chain fatty acids for both synthesis of cellular lipids, and degradation via beta-oxidation. Acts in both the wax and cutin pathways. Preferentially uses palmitate, palmitoleate, linoleate and eicosenoate. Seems to have a specific activity against very long-chain fatty acid (VLCFA) class with acids longer than 24 carbons (C(24)). The protein is Long chain acyl-CoA synthetase 1 (LACS1) of Arabidopsis thaliana (Mouse-ear cress).